An 80-amino-acid chain; its full sequence is Conotoxin Bu14 (80 aa).

Residues 1–8 (AACQLGTA) form the signal peptide. Positions 9 to 40 (ASFARDKQDYPAVRSDGRQDSKDSTLDRIAKR) are excised as a propeptide. Intrachain disulfides connect cysteine 41-cysteine 55, cysteine 48-cysteine 59, and cysteine 54-cysteine 69.

The protein belongs to the conotoxin O1 superfamily. As to expression, expressed by the venom duct.

It localises to the secreted. The sequence is that of Conotoxin Bu14 from Conus bullatus (Bubble cone).